We begin with the raw amino-acid sequence, 828 residues long: Vacuolar transporter chaperone complex subunit 2 (828 aa).

Residues 1 to 146 (MLFGVKLANE…PKYPSVKSLL (146 aa)) form the SPX domain. The Cytoplasmic portion of the chain corresponds to 1-693 (MLFGVKLANE…EAKVWLANER (693 aa)). Positions 127 to 134 (KIVKKHDK) are important for inositol polyphosphate binding. 7 positions are modified to phosphoserine: S182, S187, S196, S264, S583, S615, and S616. The segment at 580 to 636 (RRLSNLKEPQHQAAVPVSQEENERITSQGDLEADGSSDEETEQEPHSKRSKKVRRRK) is disordered. Over residues 610 to 621 (LEADGSSDEETE) the composition is skewed to acidic residues. The residue at position 620 (T620) is a Phosphothreonine. S626 carries the post-translational modification Phosphoserine. The segment covering 627–636 (KRSKKVRRRK) has biased composition (basic residues). At S657 the chain carries Phosphoserine. A helical membrane pass occupies residues 694-716 (TFNRWLSVTSLLSVLTFSIYNSV). At 717–727 (KKAEYPTLANY) the chain is on the vacuolar side. Residues 728–748 (MAYVYFGLTIFCALWSYSIYM) traverse the membrane as a helical segment. Over 749–766 (KRVDIIQQRSGQHLDAPL) the chain is Cytoplasmic. Residues 767–787 (GPVLVSIVLFVTLVVNFVMAF) form a helical membrane-spanning segment. Residues 788 to 828 (RNAAKSRQELQIQNLEVPERIPEVLRPLQNYLFKLMGPSSD) are Vacuolar-facing.

The protein belongs to the VTC2/3 family. In terms of assembly, the VTC core complex is an integral membrane heterooligomer composed of the catalytic subunit VTC4 and the accessory subunits VTC1, VTC2 and VTC3. The complex exists in 2 different sub-complexes: VTC1-VTC2-VCT4 and VCT1-VTC3-VTC4. The VCT1-VTC3-VTC4 subcomplex is mostly found on the vacuolar membrane. The VTC1-VTC2-VCT4 subcomplex is observed in the cell periphery, probably ER and nuclear envelope, but localizes to the vacuole under phosphate starvation. Each subunit contains 3 transmembrane helices. VTC1 is a small membrane protein without hydrophilic domain. VTC2, VTC3 and VTC4 are related and have 2 hydrophilic domains that face the cytosol, an N-terminal SPX domain and the central core domain. The central core in VTC4 is the catalytic domain, with the essential catalytic lysine replaced by isoleucine and leucine in VTC2 and VTC3, respectively. The core complex associates with the accessory subunit VTC5. The complex interacts with the v-SNARE NYV1 and with the V(0) subunit of V-ATPase VPH1.

The protein resides in the vacuole membrane. It localises to the cytoplasm. The protein localises to the cell cortex. It is found in the endoplasmic reticulum membrane. Its subcellular location is the cytoplasmic vesicle. The protein resides in the autophagosome membrane. In terms of biological role, accessory subunit of the vacuolar transporter chaperone (VTC) complex. The VTC complex acts as a vacuolar polyphosphate polymerase that catalyzes the synthesis of inorganic polyphosphate (polyP) via transfer of phosphate from ATP to a growing polyP chain, releasing ADP. VTC exposes its catalytic domain VTC4 to the cytosol, where the growing polyP chain winds through a tunnel-shaped pocket, integrating cytoplasmic polymer synthesis with polyP membrane translocation. The VTC complex carries 9 vacuolar transmembrane domains, which are likely to constitute the translocation channel into the organelle lumen. PolyP synthesis is tightly coupled to its transport into the vacuole lumen, in order to avoid otherwise toxic intermediates in the cytosol, and it depends on the proton gradient across the membrane, formed by V-ATPase. Binds inositol hexakisphosphate (Ins6P) and similar inositol polyphosphates, such as 5-diphospho-inositol pentakisphosphate (5-InsP7); these are important intracellular signaling molecules. Inositol polyphosphate binding promotes vacuolar polyphosphate synthesis. The VTC complex also plays a role in vacuolar membrane fusion. Required for SEC18/NSF activity in SNARE priming, membrane binding of LMA1 and V(0) trans-complex formation. This chain is Vacuolar transporter chaperone complex subunit 2, found in Saccharomyces cerevisiae (strain ATCC 204508 / S288c) (Baker's yeast).